Reading from the N-terminus, the 400-residue chain is Phosphoglycerate kinase (400 aa).

Residues 22-24 (DFN), arginine 38, 61-64 (HLGR), arginine 119, and arginine 152 each bind substrate. ATP contacts are provided by residues lysine 205, glycine 296, glutamate 327, and 353–356 (GGDT).

It belongs to the phosphoglycerate kinase family. In terms of assembly, monomer.

The protein localises to the cytoplasm. It catalyses the reaction (2R)-3-phosphoglycerate + ATP = (2R)-3-phospho-glyceroyl phosphate + ADP. It participates in carbohydrate degradation; glycolysis; pyruvate from D-glyceraldehyde 3-phosphate: step 2/5. The chain is Phosphoglycerate kinase from Campylobacter jejuni subsp. jejuni serotype O:23/36 (strain 81-176).